Here is a 485-residue protein sequence, read N- to C-terminus: Probable glycine dehydrogenase (decarboxylating) subunit 2 (485 aa).

An N6-(pyridoxal phosphate)lysine modification is found at K273.

The protein belongs to the GcvP family. C-terminal subunit subfamily. The glycine cleavage system is composed of four proteins: P, T, L and H. In this organism, the P 'protein' is a heterodimer of two subunits. It depends on pyridoxal 5'-phosphate as a cofactor.

The catalysed reaction is N(6)-[(R)-lipoyl]-L-lysyl-[glycine-cleavage complex H protein] + glycine + H(+) = N(6)-[(R)-S(8)-aminomethyldihydrolipoyl]-L-lysyl-[glycine-cleavage complex H protein] + CO2. In terms of biological role, the glycine cleavage system catalyzes the degradation of glycine. The P protein binds the alpha-amino group of glycine through its pyridoxal phosphate cofactor; CO(2) is released and the remaining methylamine moiety is then transferred to the lipoamide cofactor of the H protein. This Oceanobacillus iheyensis (strain DSM 14371 / CIP 107618 / JCM 11309 / KCTC 3954 / HTE831) protein is Probable glycine dehydrogenase (decarboxylating) subunit 2.